Here is a 182-residue protein sequence, read N- to C-terminus: Homeobox protein pnx (182 aa).

Residues 1–34 are important for interaction with tle3a; sequence MHEETSNSTLQGKTSFSIADILDPAKFNGTRETR. The tract at residues 24–63 is disordered; it reads PAKFNGTRETREISNNRESPKTTSPTQDPSAPNIANASAA. Positions 29–43 are enriched in basic and acidic residues; that stretch reads GTRETREISNNRESP. Residues 52 to 63 show a composition bias toward low complexity; sequence PSAPNIANASAA. Residues 67 to 126 constitute a DNA-binding region (homeobox); sequence SKRIRTAFTLDQLRILERSFQSSHYLSVFERHCIASALGLSETQVKIWFQNRRTKWKKEL.

The protein belongs to the NK-1 homeobox family. As to quaternary structure, interacts with tle3a.

The protein localises to the nucleus. In terms of biological role, transcriptional repressor. Activity as a repressor is enhanced by binding to the corepressor tle3a. This is Homeobox protein pnx from Danio rerio (Zebrafish).